The chain runs to 117 residues: Large ribosomal subunit protein bL20 (117 aa).

The protein belongs to the bacterial ribosomal protein bL20 family.

Its function is as follows. Binds directly to 23S ribosomal RNA and is necessary for the in vitro assembly process of the 50S ribosomal subunit. It is not involved in the protein synthesizing functions of that subunit. The polypeptide is Large ribosomal subunit protein bL20 (Gloeothece citriformis (strain PCC 7424) (Cyanothece sp. (strain PCC 7424))).